Here is a 442-residue protein sequence, read N- to C-terminus: Circumsporozoite protein (442 aa).

An N-terminal signal peptide occupies residues Met-1–Ala-18. Residues Ser-69 to Ser-357 are disordered. Residues Asp-81–Asp-94 show a composition bias toward low complexity. Residues Asn-95–Leu-115 are compositionally biased toward basic and acidic residues. Residues Lys-114–Lys-121 form a required for the binding to heparan sulfate proteoglycans (HSPGs) on the surface of host hepatocytes region. The interval Lys-122–Pro-126 is region I; contains the proteolytic cleavage site. Residues Asn-130–Asn-318 show a composition bias toward low complexity. 46 tandem repeats follow at residues Asn-134–Pro-137, Asn-138–Pro-141, Asn-142–Pro-145, Asn-146–Pro-149, Asn-150–Pro-153, Asn-154–Pro-157, Asn-158–Pro-161, Asn-162–Pro-165, Asn-166–Pro-169, Asn-170–Pro-173, Asn-174–Pro-177, Asn-178–Pro-181, Asn-182–Pro-185, Asn-186–Pro-189, Asn-190–Pro-193, Asn-194–Pro-197, Asn-198–Pro-201, Asn-202–Pro-205, Asn-206–Pro-209, Asn-210–Pro-213, Asn-214–Pro-217, Asn-218–Pro-221, Asn-222–Pro-225, Asn-226–Pro-229, Asn-230–Pro-233, Asn-234–Pro-237, Asn-238–Pro-241, Asn-242–Pro-245, Asn-246–Pro-249, Asn-250–Pro-253, Asn-254–Pro-257, Asn-258–Pro-261, Asn-262–Pro-265, Asn-266–Pro-269, Asn-270–Pro-273, Asn-274–Pro-277, Asn-278–Pro-281, Asn-282–Pro-285, Asn-286–Pro-289, Asn-290–Pro-293, Asn-294–Pro-297, Asn-298–Pro-301, Asn-302–Pro-305, Asn-306–Pro-309, Asn-310–Pro-313, and Asn-314–Pro-317. Residues Asn-134–Pro-317 form a 46 X 4 AA tandem repeats of N-[AV]-[ND]-P region. The span at Lys-319 to Pro-334 shows a compositional bias: polar residues. A compositionally biased stretch (low complexity) spans Glu-340–Glu-354. The 54-residue stretch at Lys-367–Ser-420 folds into the TSP type-1 domain. Intrachain disulfides connect Cys-379–Cys-414 and Cys-383–Cys-419. Thr-382 is a glycosylation site (O-linked (Fuc) threonine). Cys-419 carries the GPI-anchor amidated cysteine lipid modification. A propeptide spans Ser-420–Asn-442 (removed in mature form).

This sequence belongs to the plasmodium circumsporozoite protein family. During host cell invasion, proteolytically cleaved at the cell membrane in the region I by a papain-like cysteine protease of parasite origin. Cleavage is triggered by the sporozoite contact with highly sulfated heparan sulfate proteoglycans (HSPGs) present on the host hepatocyte cell surface. Cleavage exposes the TSP type-1 (TSR) domain and is required for productive invasion of host hepatocytes but not for adhesion to the host cell membrane. Cleavage is dispensable for sporozoite development in the oocyst, motility and for traversal of host and vector cells. In terms of processing, O-glycosylated; maybe by POFUT2.

It localises to the cell membrane. It is found in the cytoplasm. Its function is as follows. Essential sporozoite protein. In the mosquito vector, required for sporozoite development in the oocyst, migration through the vector hemolymph and entry into the vector salivary glands. In the vertebrate host, required for sporozoite migration through the host dermis and infection of host hepatocytes. Binds to highly sulfated heparan sulfate proteoglycans (HSPGs) on the surface of host hepatocytes. In the vertebrate host, binds to highly sulfated heparan sulfate proteoglycans (HSPGs) on the surface of host hepatocytes and is required for sporozoite invasion of the host hepatocytes. This is Circumsporozoite protein from Plasmodium falciparum (isolate Wellcome).